Consider the following 175-residue polypeptide: Regenerating islet-derived protein 3-alpha (175 aa).

Positions 1–26 are cleaved as a signal peptide; that stretch reads MLPHLVLNSISWMLLSCLLFVFQVQG. The propeptide occupies 27–37; that stretch reads EDFQKEVPSPR. Cystine bridges form between Cys40/Cys51, Cys68/Cys171, and Cys146/Cys163. Residues 47-172 form the C-type lectin domain; the sequence is YRSHCYALVM…CDGTLPFVCK (126 aa). Zn(2+) is bound by residues His50, His107, Glu121, and His145. Residues 103–118 form a sufficient to activate EXTL3 region; the sequence is WIGLHDPTMGQQPNGG.

Forms a hexameric membrane-permeabilizing oligomeric pore on membrane phospholipids. The hexamer is formed by three dimers related by helical symmetry. Forms filaments, filamentation traps pore complexes and limits damage to host cells. Interacts with EXTL3. Proteolytic processing by trypsin removes an inhibitory N-terminal propeptide and is essential for peptidoglycan binding and antibacterial activity. Small intestine and pancreas.

It is found in the secreted. Functionally, bactericidal C-type lectin. The lack of the EPN motif may explain its inability to bind peptidoglycan. Acts as a hormone in response to different stimuli like anti-inflammatory signals, such as IL17A, or gut microbiome. Secreted by different cell types to activate its receptor EXTL3 and induce cell specific signaling pathways. Induced by IL17A in keratinocytes, regulates keratinocyte proliferation and differentiation after skin injury via activation of EXTL3-PI3K-AKT signaling pathway. In parallel, inhibits skin inflammation through the inhibition of inflammatory cytokines such as IL6 and TNF. In pancreas, is able to permealize beta-cells membrane and stimulate their proliferation. In Mus musculus (Mouse), this protein is Regenerating islet-derived protein 3-alpha (Reg3a).